The chain runs to 1007 residues: Glutamate receptor ionotropic, delta-2 (1007 aa).

The N-terminal stretch at 1–23 (MEVFPLLLFLSFCWSRTWDLATA) is a signal peptide. An interaction with CBLN1 homotrimer region spans residues 24 to 345 (DSIIHIGAIF…NAFHKKLEDR (322 aa)). At 24–566 (DSIIHIGAIF…DMFACLAPFD (543 aa)) the chain is on the extracellular side. Cystine bridges form between C83/C355, C99/C131, and C298/C310. N293 carries N-linked (GlcNAc...) asparagine glycosylation. N-linked (GlcNAc...) asparagine glycosylation occurs at N426. Ca(2+) is bound by residues E531, V534, and D535. A helical membrane pass occupies residues 567 to 587 (LSLWACIAGTVLLVGLLVYLL). Topologically, residues 588–635 (NWLNPPRLQMGSMTSTTLYNSMWFVYGSFVQQGGEVPYTTLATRMMMG) are cytoplasmic. A helical transmembrane segment spans residues 636–656 (AWWLFALIVISSYTANLAAFL). Over 657–830 (TITRIESSIQ…QKGGALDIKS (174 aa)) the chain is Extracellular. N-linked (GlcNAc...) asparagine glycosylation is found at N713 and N716. Residues D753, D755, and S757 each coordinate Ca(2+). A helical transmembrane segment spans residues 831–851 (LAGVFCILAAGIVLSCLIAVL). At 852–1007 (ETWWSRRKGS…GNDPDRGTSI (156 aa)) the chain is on the cytoplasmic side. At S883 the chain carries Phosphoserine. The residue at position 886 (T886) is a Phosphothreonine. The residue at position 890 (S890) is a Phosphoserine. Residues 921-991 (DFRNTHITTT…MSSIPYQPTP (71 aa)) form an interaction with AP4M1 region. Residues 1005–1007 (TSI) carry the PDZ-binding motif. S1006 bears the Phosphoserine mark.

Belongs to the glutamate-gated ion channel (TC 1.A.10.1) family. GRID2 subfamily. As to quaternary structure, tetramer; dimer of dimers. Interacts with EML2, MAGI2 (via PDZ domains) and AP4M1. Interacts with BECN1, GOPC, GRID2IP, SHANK1 and SHANK2. Interacts with CBLN2, but not with CBLN4. Interacts with CBLN1 (via C1q domain); the interaction is CBLN1-NRX1 complex formation-dependent; CBLN1-binding is calcium-independent; CBLN1 hexamers anchor GRID2 N-terminal domain dimers to monomeric NRXN1 isoform beta; promotes synaptogenesis and mediates the D-Serine-dependent long term depression signals and AMPA receptor endocytosis. As to expression, expressed selectively in cerebellar Purkinje cells where it is localized in dendritic spines.

The protein resides in the postsynaptic cell membrane. The catalysed reaction is Ca(2+)(in) = Ca(2+)(out). It catalyses the reaction Na(+)(in) = Na(+)(out). In terms of biological role, member of the ionotropic glutamate receptor family, which plays a crucial role in synaptic organization and signal transduction in the central nervous system. Although it shares structural features with ionotropic glutamate receptors, does not bind glutamate as a primary ligand. Promotes synaptogenesis and mediates the D-Serine-dependent long term depression signals and AMPA receptor endocytosis of cerebellar parallel fiber-Purkinje cell (PF-PC) synapses through the NRX1B-CBLN1-GRID2 triad complex. In the presence of neurexins and cerebellins, forms cation-selective channels that are proposed to be gated by glycine and D-serine. However, recent research disputes this ligand-gated cation channel activity. Cation-selective ion channel activity can be triggered by GRM1 in Purkinje cells. This chain is Glutamate receptor ionotropic, delta-2 (Grid2), found in Mus musculus (Mouse).